The primary structure comprises 324 residues: Antihemorrhagic factor cHLP-A (324 aa).

An N-terminal signal peptide occupies residues 1-19; the sequence is MNSLVALVLLGQIIGSTLS. Cystatin fetuin-A-type domains follow at residues 21 to 130 and 141 to 254; these read QLGP…VKCK and RNCP…SDCV. 6 disulfide bridges follow: cysteine 28–cysteine 315, cysteine 85–cysteine 96, cysteine 110–cysteine 129, cysteine 143–cysteine 146, cysteine 205–cysteine 217, and cysteine 230–cysteine 253. Asparagine 204 carries an N-linked (GlcNAc...) asparagine glycan. N-linked (GlcNAc...) asparagine glycosylation occurs at asparagine 282.

It belongs to the fetuin family. As to quaternary structure, homodimer. As to expression, expressed by the liver.

It is found in the secreted. In terms of biological role, potent inhibitor of hemorrhagic activity but also proteolytic activities. Inhibition occurs by formation of a non-covalent complex between this protein and the proteinases at their metalloproteinase domains. This chain is Antihemorrhagic factor cHLP-A, found in Gloydius brevicauda (Korean slamosa snake).